Reading from the N-terminus, the 90-residue chain is Putative F-box protein At5g16285 (90 aa).

One can recognise an F-box domain in the interval 1–46; sequence MRIESLLQHDVVERILERLAVNSLPRFKAVSKQWKSTIESQFFQGK.

The protein is Putative F-box protein At5g16285 of Arabidopsis thaliana (Mouse-ear cress).